The following is a 504-amino-acid chain: 2-methylcitrate dehydratase 2 (504 aa).

The protein belongs to the PrpD family. In terms of assembly, monomer.

It carries out the reaction (2S,3S)-2-methylcitrate = 2-methyl-cis-aconitate + H2O. The catalysed reaction is citrate = D-threo-isocitrate. It participates in organic acid metabolism; propanoate degradation. It functions in the pathway carbohydrate metabolism; tricarboxylic acid cycle; isocitrate from oxaloacetate: step 1/2. Its function is as follows. Involved in the catabolism of short chain fatty acids (SCFA) via the 2-methylcitrate cycle I (propionate degradation route). Catalyzes the dehydration of 2-methylcitrate (2-MC) to yield the cis isomer 2-methyl-aconitate. Could also catalyze the dehydration of citrate and the hydration of cis-aconitate. The chain is 2-methylcitrate dehydratase 2 (prpD2) from Corynebacterium glutamicum (strain ATCC 13032 / DSM 20300 / JCM 1318 / BCRC 11384 / CCUG 27702 / LMG 3730 / NBRC 12168 / NCIMB 10025 / NRRL B-2784 / 534).